Here is a 122-residue protein sequence, read N- to C-terminus: MILGIGVDLVCTRRIQALIAKYGNKFTNRIFSEKEILDSLKYRDEYARARHFAKRFAAKEAYVKALGLGFGRGVEAKDISVHNDPYGQPMISLEGGALRNGHVKLSMSDDGDYAIAFVTLHT.

Positions 8 and 60 each coordinate Mg(2+).

Belongs to the P-Pant transferase superfamily. AcpS family. Mg(2+) is required as a cofactor.

The protein localises to the cytoplasm. It carries out the reaction apo-[ACP] + CoA = holo-[ACP] + adenosine 3',5'-bisphosphate + H(+). Functionally, transfers the 4'-phosphopantetheine moiety from coenzyme A to a Ser of acyl-carrier-protein. The sequence is that of Holo-[acyl-carrier-protein] synthase from Anaplasma phagocytophilum (strain HZ).